Consider the following 476-residue polypeptide: ATP synthase subunit beta, chloroplastic (476 aa).

156-163 (GGAGVGKT) is an ATP binding site.

Belongs to the ATPase alpha/beta chains family. As to quaternary structure, F-type ATPases have 2 components, CF(1) - the catalytic core - and CF(0) - the membrane proton channel. CF(1) has five subunits: alpha(3), beta(3), gamma(1), delta(1), epsilon(1). CF(0) has four main subunits: a(1), b(1), b'(1) and c(9-12).

It localises to the plastid. Its subcellular location is the chloroplast thylakoid membrane. It carries out the reaction ATP + H2O + 4 H(+)(in) = ADP + phosphate + 5 H(+)(out). Produces ATP from ADP in the presence of a proton gradient across the membrane. The catalytic sites are hosted primarily by the beta subunits. This Fucus vesiculosus (Bladder wrack) protein is ATP synthase subunit beta, chloroplastic.